Reading from the N-terminus, the 273-residue chain is Shikimate dehydrogenase (NADP(+)) (273 aa).

Shikimate-binding positions include 15–17 and T62; that span reads SLS. The active-site Proton acceptor is the K66. E78 contacts NADP(+). Shikimate is bound by residues N87 and D102. Residues 126–130, 149–154, I215, and G238 each bind NADP(+); these read GAGGA and NRTPER.

Belongs to the shikimate dehydrogenase family. As to quaternary structure, homodimer.

The catalysed reaction is shikimate + NADP(+) = 3-dehydroshikimate + NADPH + H(+). The protein operates within metabolic intermediate biosynthesis; chorismate biosynthesis; chorismate from D-erythrose 4-phosphate and phosphoenolpyruvate: step 4/7. In terms of biological role, involved in the biosynthesis of the chorismate, which leads to the biosynthesis of aromatic amino acids. Catalyzes the reversible NADPH linked reduction of 3-dehydroshikimate (DHSA) to yield shikimate (SA). In Desulfitobacterium hafniense (strain Y51), this protein is Shikimate dehydrogenase (NADP(+)).